Here is a 365-residue protein sequence, read N- to C-terminus: Homeobox protein Nkx-6.1 (365 aa).

A disordered region spans residues 35–136 (LYPAAYPPLP…SSSSASATSA (102 aa)). 3 stretches are compositionally biased toward low complexity: residues 48–59 (PSSSSSSSSSSS), 69–92 (PGGL…QLSA), and 110–136 (ASGA…ATSA). Residues 102–269 (LSRPSMPVAS…KYLAGPERAR (168 aa)) form a repressor domain region. R190 is modified (asymmetric dimethylarginine). A DNA-binding region (homeobox) is located at residues 237–296 (RKHTRPTFSGQQIFALEKTFEQTKYLAGPERARLAYSLGMTESQVKVWFQNRRTKWRKKH). The disordered stretch occupies residues 295 to 365 (KHAAEMATAK…LHASEAEGSS (71 aa)). Basic and acidic residues predominate over residues 305 to 318 (KKQDSETERLKGTS). An involved in DNA-binding region spans residues 307–365 (QDSETERLKGTSENEEDDDDYNKPLDPNSDDEKITQLLKKHKSSGGSLLLHASEAEGSS).

As to expression, pancreatic beta cells.

Its subcellular location is the nucleus. In terms of biological role, transcription factor which binds to specific A/T-rich DNA sequences in the promoter regions of a number of genes. Involved in the development of insulin-producing beta cells in the islets of Langerhans at the secondary transition. Together with NKX2-2 and IRX3 acts to restrict the generation of motor neurons to the appropriate region of the neural tube. Belongs to the class II proteins of neuronal progenitor factors, which are induced by SHH signals. The chain is Homeobox protein Nkx-6.1 (Nkx6-1) from Rattus norvegicus (Rat).